The following is a 487-amino-acid chain: Betaine aldehyde dehydrogenase (487 aa).

Residues S26 and D93 each contribute to the K(+) site. Residue 150–152 participates in NAD(+) binding; the sequence is GAW. The Charge relay system role is filled by K162. NAD(+)-binding positions include 176–179 and 229–232; these read KPSE and SVPT. Residue L244 coordinates K(+). The active-site Proton acceptor is the E250. Residues G252, C284, and E384 each contribute to the NAD(+) site. The Nucleophile role is filled by C284. C284 is subject to Cysteine sulfenic acid (-SOH). K(+) is bound by residues K454 and G457. The Charge relay system role is filled by E461.

It belongs to the aldehyde dehydrogenase family. As to quaternary structure, dimer of dimers. Requires K(+) as cofactor.

It carries out the reaction betaine aldehyde + NAD(+) + H2O = glycine betaine + NADH + 2 H(+). Its pathway is amine and polyamine biosynthesis; betaine biosynthesis via choline pathway; betaine from betaine aldehyde: step 1/1. Functionally, involved in the biosynthesis of the osmoprotectant glycine betaine. Catalyzes the irreversible oxidation of betaine aldehyde to the corresponding acid. This Rhizobium leguminosarum bv. trifolii (strain WSM2304) protein is Betaine aldehyde dehydrogenase.